Here is a 308-residue protein sequence, read N- to C-terminus: Ribosome maturation factor RimP (308 aa).

Disordered regions lie at residues 1-31, 94-113, and 249-308; these read MARA…AADA, EDIG…AAGG, and DLDE…EMNR. The segment covering 17–31 has biased composition (low complexity); sequence APSRRTGGARAAADA. Over residues 99–113 the composition is skewed to gly residues; it reads DGAGGTGGSGGAAGG. Residues 249-269 show a composition bias toward acidic residues; it reads DLDEGLEDDDGLEDEDDEDEY.

It belongs to the RimP family.

The protein localises to the cytoplasm. Functionally, required for maturation of 30S ribosomal subunits. This chain is Ribosome maturation factor RimP, found in Parafrankia sp. (strain EAN1pec).